The sequence spans 436 residues: Phosphomethylpyrimidine synthase (436 aa).

Residues Asn69, Met98, Tyr127, His163, 185–187 (SRG), 226–229 (DACR), and Glu265 each bind substrate. His269 is a Zn(2+) binding site. Tyr292 serves as a coordination point for substrate. A Zn(2+)-binding site is contributed by His333. 3 residues coordinate [4Fe-4S] cluster: Cys409, Cys412, and Cys416.

The protein belongs to the ThiC family. Requires [4Fe-4S] cluster as cofactor.

The enzyme catalyses 5-amino-1-(5-phospho-beta-D-ribosyl)imidazole + S-adenosyl-L-methionine = 4-amino-2-methyl-5-(phosphooxymethyl)pyrimidine + CO + 5'-deoxyadenosine + formate + L-methionine + 3 H(+). Its pathway is cofactor biosynthesis; thiamine diphosphate biosynthesis. In terms of biological role, catalyzes the synthesis of the hydroxymethylpyrimidine phosphate (HMP-P) moiety of thiamine from aminoimidazole ribotide (AIR) in a radical S-adenosyl-L-methionine (SAM)-dependent reaction. The protein is Phosphomethylpyrimidine synthase of Clostridium perfringens (strain SM101 / Type A).